The primary structure comprises 1690 residues: DNA-directed RNA polymerase subunit beta' (1690 aa).

The Zn(2+) site is built by Cys63, Cys65, Cys78, and Cys81. 3 residues coordinate Mg(2+): Asp753, Asp755, and Asp757. Zn(2+)-binding residues include Cys1107, Cys1295, Cys1302, and Cys1305.

It belongs to the RNA polymerase beta' chain family. As to quaternary structure, the RNAP catalytic core consists of 2 alpha, 1 beta, 1 beta' and 1 omega subunit. When a sigma factor is associated with the core the holoenzyme is formed, which can initiate transcription. Requires Mg(2+) as cofactor. The cofactor is Zn(2+).

The catalysed reaction is RNA(n) + a ribonucleoside 5'-triphosphate = RNA(n+1) + diphosphate. Functionally, DNA-dependent RNA polymerase catalyzes the transcription of DNA into RNA using the four ribonucleoside triphosphates as substrates. This chain is DNA-directed RNA polymerase subunit beta', found in Thermotoga maritima (strain ATCC 43589 / DSM 3109 / JCM 10099 / NBRC 100826 / MSB8).